A 357-amino-acid chain; its full sequence is TPISEDCLYLNVWQPSPAPTGATVLVWIYGGGFFSGTSSLDVYDGRYLARMEDVVVVSMNYRLGALGFLYTGSEAAPGNAGLLDQHLALQWVQQNIQSFGGDPGKVTIFGESAGAASVNFHMLSPMSRDLFQRAMMHSASALAPWAVTPSEQARQRSKALAIDIGCSADEEDMDVLVACLREVSAQTILDHEWNVVDLSDAHFLADIPFPPVKDGRFITEDPAEMYAAGNFKDIDILVGFVKDEGNFWLVYGVPGFDKDTDSIIDRETFVGDIVFCHPRLNDITVERTAFEYTDWLHMDQDTMYRDALDSVFGDPFFVCPTMAVGKAHVNHGRTAYVYEFAQVASNLAWPHWMGAMH.

Serine 112 serves as the catalytic Acyl-ester intermediate. Cysteine 166 and cysteine 179 are oxidised to a cystine. Residues glutamate 244 and histidine 357 each act as charge relay system in the active site.

The protein belongs to the type-B carboxylesterase/lipase family.

It carries out the reaction an acylcholine + H2O = a carboxylate + choline + H(+). The sequence is that of Cholinesterase 1 (CHE1) from Branchiostoma lanceolatum (Common lancelet).